Here is a 210-residue protein sequence, read N- to C-terminus: 7-carboxy-7-deazaguanine synthase (210 aa).

Residues leucine 12–glycine 14 and arginine 27 each bind substrate. The Radical SAM core domain maps to glutamine 18–proline 210. [4Fe-4S] cluster is bound by residues cysteine 31, cysteine 46, and cysteine 49. Threonine 51 contacts Mg(2+). Substrate is bound at residue threonine 90. Residues glycine 92, serine 133–lysine 135, and glutamine 173–aspartate 176 contribute to the S-adenosyl-L-methionine site. Proline 210 serves as a coordination point for substrate.

It belongs to the radical SAM superfamily. 7-carboxy-7-deazaguanine synthase family. In terms of assembly, homodimer. Requires [4Fe-4S] cluster as cofactor. It depends on S-adenosyl-L-methionine as a cofactor. The cofactor is Mg(2+).

It catalyses the reaction 6-carboxy-5,6,7,8-tetrahydropterin + H(+) = 7-carboxy-7-deazaguanine + NH4(+). It functions in the pathway purine metabolism; 7-cyano-7-deazaguanine biosynthesis. Its function is as follows. Catalyzes the complex heterocyclic radical-mediated conversion of 6-carboxy-5,6,7,8-tetrahydropterin (CPH4) to 7-carboxy-7-deazaguanine (CDG), a step common to the biosynthetic pathways of all 7-deazapurine-containing compounds. The chain is 7-carboxy-7-deazaguanine synthase from Caulobacter vibrioides (strain ATCC 19089 / CIP 103742 / CB 15) (Caulobacter crescentus).